The following is a 1893-amino-acid chain: Nestin (1893 aa).

Met-1 is subject to N-acetylmethionine. Residues 1–7 form a head region; the sequence is MEGCVGE. A coil 1A region spans residues 8 to 43; it reads ESFQMWELNRRLEAYLTRVKTLEEQNQLLSAELGGL. The IF rod domain maps to 8-314; it reads ESFQMWELNR…TLLEAENSRL (307 aa). The tract at residues 44 to 55 is linker 1; the sequence is RAQSGDTSWRAR. The coil 1B stretch occupies residues 56–151; sequence ADDELASLRI…AAHEEERAHL (96 aa). A disordered region spans residues 150–172; sequence HLNAQAACAPRRPPAPPHGSPVR. The interval 152–174 is linker 12; the sequence is NAQAACAPRRPPAPPHGSPVRAP. The segment at 175–193 is coil 2A; that stretch reads EVEDLARRLGEVWRGAVRD. The tract at residues 194–196 is linker 2; it reads YQE. The coil 2B stretch occupies residues 197 to 314; the sequence is RVAHMESSLG…TLLEAENSRL (118 aa). Residue Ser-312 is modified to Phosphoserine. The interval 315-1893 is tail; sequence QTPGRGSQAS…DGDSWSSGED (1579 aa). Thr-316 carries the phosphothreonine modification. Residues Ser-356 and Ser-359 each carry the phosphoserine modification. Phosphothreonine is present on Thr-389. Disordered stretches follow at residues 437-479, 507-529, and 556-879; these read PELE…SGSR, NSSA…SQGP, and KENC…NQKS. Over residues 507-517 the composition is skewed to polar residues; it reads NSSAQKTQESG. The residue at position 562 (Ser-562) is a Phosphoserine. Basic and acidic residues-rich tracts occupy residues 572-595 and 606-615; these read GPEK…EKTL and LGKEDTRTED. At Ser-620 the chain carries Phosphoserine. Composition is skewed to basic and acidic residues over residues 634 to 646 and 670 to 681; these read ESQE…KEGN and MLERLVEKEDQS. Residues Ser-685 and Ser-729 each carry the phosphoserine modification. 4 stretches are compositionally biased toward basic and acidic residues: residues 717-730, 761-774, 802-818, and 846-879; these read RLIE…LRSP, RLIE…LRSA, ILER…LRSP, and MLER…NQKS. Ser-817 is subject to Phosphoserine. At Ser-903 the chain carries Phosphoserine. Composition is skewed to basic and acidic residues over residues 949–966 and 989–1051; these read LLED…DRNG and QRIV…KSLE. The interval 949–1130 is disordered; the sequence is LLEDKTHKSL…ARSLGKENQE (182 aa). Phosphoserine is present on residues Ser-1005 and Ser-1049. Residue Lys-1136 forms a Glycyl lysine isopeptide (Lys-Gly) (interchain with G-Cter in SUMO1); alternate linkage. A Glycyl lysine isopeptide (Lys-Gly) (interchain with G-Cter in SUMO2); alternate cross-link involves residue Lys-1136. Ser-1145 and Ser-1166 each carry phosphoserine. The tract at residues 1155 to 1222 is disordered; sequence ETAEEDLERR…ELSSLGKWNV (68 aa). A compositionally biased stretch (basic and acidic residues) spans 1198-1212; sequence DENRETLTSLEKESQ. Ser-1216 and Ser-1229 each carry phosphoserine. Positions 1237–1263 are disordered; the sequence is EGLQEEQHQESLREVKQELPSSGNQQR. Residues 1241-1253 show a composition bias toward basic and acidic residues; that stretch reads EEQHQESLREVKQ. Residue Ser-1322 is modified to Phosphoserine. Disordered regions lie at residues 1336-1369 and 1388-1824; these read DNLE…EQDS and EVVG…SEQV. 2 stretches are compositionally biased toward basic and acidic residues: residues 1354–1363 and 1393–1403; these read VTERDEDRAQ and EDPRHFAREEA. 2 stretches are compositionally biased toward acidic residues: residues 1458–1469 and 1561–1576; these read ESMEGWEEEEAS and QDWE…DDLG. Ser-1570, Ser-1594, Ser-1686, Ser-1695, Ser-1772, and Ser-1774 each carry phosphoserine. Over residues 1688-1709 the composition is skewed to acidic residues; the sequence is GFADEEESGEEGEEEDADEEGA. Residues 1773-1788 show a composition bias toward acidic residues; that stretch reads GSEESESASLEGEEGQ. The segment covering 1815–1824 has biased composition (polar residues); sequence QSPNLDSEQV. 3 positions are modified to phosphoserine: Ser-1866, Ser-1889, and Ser-1890. Positions 1870–1893 are disordered; the sequence is LGPSQPLKFTLSGVDGDSWSSGED.

Belongs to the intermediate filament family. Forms homodimers and homotetramers in vitro. In mixtures with other intermediate filament proteins such as vimentin and alpha-internexin, this protein preferentially forms heterodimers which can assemble to form intermediate filaments if nestin does not exceed 25%. Interacts with FHOD3. Constitutively phosphorylated. This increases during mitosis when the cytoplasmic intermediate filament network is reorganized. CNS stem cells.

In terms of biological role, required for brain and eye development. Promotes the disassembly of phosphorylated vimentin intermediate filaments (IF) during mitosis and may play a role in the trafficking and distribution of IF proteins and other cellular factors to daughter cells during progenitor cell division. Required for survival, renewal and mitogen-stimulated proliferation of neural progenitor cells. The polypeptide is Nestin (Nes) (Rattus norvegicus (Rat)).